A 320-amino-acid chain; its full sequence is Small ribosomal subunit protein uS2 (320 aa).

The segment at 254 to 320 (GDAAKAALPV…APATTGPVSE (67 aa)) is disordered. Over residues 272–282 (VSAKNEAKSDD) the composition is skewed to basic and acidic residues. A compositionally biased stretch (low complexity) spans 308–320 (AEAAPATTGPVSE).

Belongs to the universal ribosomal protein uS2 family.

The polypeptide is Small ribosomal subunit protein uS2 (Clavibacter sepedonicus (Clavibacter michiganensis subsp. sepedonicus)).